Reading from the N-terminus, the 304-residue chain is Urease accessory protein UreD 2 (304 aa).

The protein belongs to the UreD family. In terms of assembly, ureD, UreF and UreG form a complex that acts as a GTP-hydrolysis-dependent molecular chaperone, activating the urease apoprotein by helping to assemble the nickel containing metallocenter of UreC. The UreE protein probably delivers the nickel.

Its subcellular location is the cytoplasm. Its function is as follows. Required for maturation of urease via the functional incorporation of the urease nickel metallocenter. Functionally, disrupting the ure2 operon has no effect on urease activity or pathogen survival in BALB/c mice when administered orally. The protein is Urease accessory protein UreD 2 of Brucella abortus (strain 2308).